Reading from the N-terminus, the 369-residue chain is RING-H2 finger protein ATL47 (369 aa).

Residues 52 to 72 form a helical membrane-spanning segment; it reads IILFIIVLLSVIFFICSILHL. An RING-type; atypical zinc finger spans residues 144–186; it reads CAVCLCEFSEDDKLRLLPNCSHAFHIDCIDTWLLSNSTCPLCR. Residues 332 to 355 form a disordered region; sequence NNHPSETNLVVGGSSSSSSYVCSG. Positions 341–355 are enriched in low complexity; the sequence is VVGGSSSSSSYVCSG.

The protein belongs to the RING-type zinc finger family. ATL subfamily.

Its subcellular location is the membrane. The catalysed reaction is S-ubiquitinyl-[E2 ubiquitin-conjugating enzyme]-L-cysteine + [acceptor protein]-L-lysine = [E2 ubiquitin-conjugating enzyme]-L-cysteine + N(6)-ubiquitinyl-[acceptor protein]-L-lysine.. Its pathway is protein modification; protein ubiquitination. The sequence is that of RING-H2 finger protein ATL47 (ATL47) from Arabidopsis thaliana (Mouse-ear cress).